The chain runs to 862 residues: MGEVNKDAVEKYLENNPQFAKEYFDRKMRAEVLGSIFQVSPGDVKEGVSFKDMSRLEECNILFELLTEIQDEAGSMEKIVHKTLQRLSQLLARDRCSMFICRSRNGIPEVATRLLNVTPTSKFEDNLVNPDKETVFPLDIGIAGWVAHTKKFFNIPDVKKNNHFSDYLDKKTGYTTVNMMAIPITQGKEVLAVVMALNKLNASEFSKEDEEVFKKYLNFISLVLRNHHTSYLYNIESRRSQMLLWSANKVFEELTDIERQFHKALYTIRMYLNCERYSVGLLDMTKEKEFYDEWPIRLGEAEPYKGPKTPDGREVNFYKIIDYILHGKEEIKVIPTPPADHWCLISGLPTYVAENGFICNMMNAPADEYFTFQKGPVDETGWVIKNVLSLPIVNKKEEIVGVATFYNRKDGKPFDEYDEQIIETLTQFLGWSVLNTDTYDKMNKLENRKDIAQEMLMYQTKATPTEVESILKYKEKLNVKSIEECDEKDLIRILKEELPDPKDLELYEFRFSDFPVTEHGLITCGIRLFFEINVVEKFKVPAEVLTRWMYTVRKGYRDITYHNWRHGFNVGQTMFTLLMTGRIKKYYTDLEAFAMVAAAFCHDIDHRGTNNLYQMKSAAPLAKLHGSSILERHHLEYSKTLLQDESLNIFQNLNKRQFETVLHLFEVAIIATDLALYFKKRTMFQKIVDAIEKMETEEEAIKYISIDPTKKEVIMAMMMTGCDLSAITKPWEVQSKVALMVANEFWEQGDLERTVLQQQPIPMMDRNKGDELPKLQVGFIDFVCTFVYKEFSRFHKEITPMFDGLQNNRVEWKTRADEYEEKMKVIEEQKKKEEEAAAKKAENAAGGGGGGEDGKSKTCIVL.

2 GAF domains span residues 75-224 (SMEK…SLVL) and 256-433 (DIER…GWSV). 3',5'-cyclic GMP contacts are provided by residues Ser-97, Asn-116, 169-172 (DKKT), and Thr-176. The PDEase domain maps to 486-819 (DEKDLIRILK…VEWKTRADEY (334 aa)). Catalysis depends on His-562, which acts as the Proton donor. His-566, His-602, Asp-603, and Asp-723 together coordinate a divalent metal cation. Residues 830-842 (KKKEEEAAAKKAE) show a composition bias toward basic and acidic residues. The disordered stretch occupies residues 830 to 862 (KKKEEEAAAKKAENAAGGGGGGEDGKSKTCIVL). Residue Cys-859 is modified to Cysteine methyl ester. Cys-859 carries S-geranylgeranyl cysteine lipidation. The propeptide at 860–862 (IVL) is removed in mature form.

The protein belongs to the cyclic nucleotide phosphodiesterase family. As to quaternary structure, composed of two alpha' subunits that are associated with 3 smaller proteins of 11, 13, and 15 kDa. The cofactor is a divalent metal cation.

It localises to the cell membrane. The enzyme catalyses 3',5'-cyclic GMP + H2O = GMP + H(+). In terms of biological role, as cone-specific cGMP phosphodiesterase, it plays an essential role in light detection and cone phototransduction by rapidly decreasing intracellular levels of cGMP. In Gallus gallus (Chicken), this protein is Cone cGMP-specific 3',5'-cyclic phosphodiesterase subunit alpha' (PDE6C).